We begin with the raw amino-acid sequence, 266 residues long: Putative carbamate hydrolase RutD (266 aa).

The protein belongs to the AB hydrolase superfamily. Hydrolase RutD family.

It carries out the reaction carbamate + 2 H(+) = NH4(+) + CO2. Involved in pyrimidine catabolism. May facilitate the hydrolysis of carbamate, a reaction that can also occur spontaneously. The sequence is that of Putative carbamate hydrolase RutD from Enterobacter cloacae subsp. cloacae (strain ATCC 13047 / DSM 30054 / NBRC 13535 / NCTC 10005 / WDCM 00083 / NCDC 279-56).